Reading from the N-terminus, the 383-residue chain is Probable L-tyrosine/L-aspartate decarboxylase (383 aa).

K227 carries the post-translational modification N6-(pyridoxal phosphate)lysine.

Belongs to the group II decarboxylase family. MfnA subfamily. Pyridoxal 5'-phosphate serves as cofactor.

The enzyme catalyses L-tyrosine + H(+) = tyramine + CO2. The catalysed reaction is L-aspartate + H(+) = beta-alanine + CO2. Its pathway is cofactor biosynthesis; methanofuran biosynthesis. The protein operates within cofactor biosynthesis; coenzyme A biosynthesis. In terms of biological role, catalyzes the decarboxylation of L-tyrosine to produce tyramine for methanofuran biosynthesis. Can also catalyze the decarboxylation of L-aspartate to produce beta-alanine for coenzyme A (CoA) biosynthesis. This Methanothrix thermoacetophila (strain DSM 6194 / JCM 14653 / NBRC 101360 / PT) (Methanosaeta thermophila) protein is Probable L-tyrosine/L-aspartate decarboxylase.